Here is a 29-residue protein sequence, read N- to C-terminus: Cytochrome b6-f complex subunit 8 (29 aa).

A helical membrane pass occupies residues 3 to 23 (IVSIGWAALMVVFTFSLSLVV).

This sequence belongs to the PetN family. As to quaternary structure, the 4 large subunits of the cytochrome b6-f complex are cytochrome b6, subunit IV (17 kDa polypeptide, PetD), cytochrome f and the Rieske protein, while the 4 small subunits are PetG, PetL, PetM and PetN. The complex functions as a dimer.

It localises to the plastid. The protein resides in the chloroplast thylakoid membrane. Functionally, component of the cytochrome b6-f complex, which mediates electron transfer between photosystem II (PSII) and photosystem I (PSI), cyclic electron flow around PSI, and state transitions. This Zygnema circumcarinatum (Green alga) protein is Cytochrome b6-f complex subunit 8.